The chain runs to 629 residues: tRNA uridine 5-carboxymethylaminomethyl modification enzyme MnmG (629 aa).

Glycine 13–glycine 18 is an FAD binding site. NAD(+) is bound at residue glycine 273–phenylalanine 287.

It belongs to the MnmG family. As to quaternary structure, homodimer. Heterotetramer of two MnmE and two MnmG subunits. Requires FAD as cofactor.

It is found in the cytoplasm. Functionally, NAD-binding protein involved in the addition of a carboxymethylaminomethyl (cmnm) group at the wobble position (U34) of certain tRNAs, forming tRNA-cmnm(5)s(2)U34. The polypeptide is tRNA uridine 5-carboxymethylaminomethyl modification enzyme MnmG (Shewanella baltica (strain OS195)).